Here is a 115-residue protein sequence, read N- to C-terminus: Large ribosomal subunit protein uL23 (115 aa).

It belongs to the universal ribosomal protein uL23 family. Part of the 50S ribosomal subunit. Contacts protein L29, and trigger factor when it is bound to the ribosome.

In terms of biological role, one of the early assembly proteins it binds 23S rRNA. One of the proteins that surrounds the polypeptide exit tunnel on the outside of the ribosome. Forms the main docking site for trigger factor binding to the ribosome. This is Large ribosomal subunit protein uL23 from Granulibacter bethesdensis (strain ATCC BAA-1260 / CGDNIH1).